The primary structure comprises 352 residues: Anthranilate phosphoribosyltransferase (352 aa).

Residues Gly94, 97–98 (GS), Ser102, 104–107 (NIST), 122–130 (KHGNRAVSS), and Ser134 contribute to the 5-phospho-alpha-D-ribose 1-diphosphate site. Gly94 is an anthranilate binding site. Ser106 contributes to the Mg(2+) binding site. Asn125 is a binding site for anthranilate. An anthranilate-binding site is contributed by Arg180. Residues Asp239 and Glu240 each coordinate Mg(2+).

Belongs to the anthranilate phosphoribosyltransferase family. As to quaternary structure, homodimer. It depends on Mg(2+) as a cofactor.

The enzyme catalyses N-(5-phospho-beta-D-ribosyl)anthranilate + diphosphate = 5-phospho-alpha-D-ribose 1-diphosphate + anthranilate. Its pathway is amino-acid biosynthesis; L-tryptophan biosynthesis; L-tryptophan from chorismate: step 2/5. Its function is as follows. Catalyzes the transfer of the phosphoribosyl group of 5-phosphorylribose-1-pyrophosphate (PRPP) to anthranilate to yield N-(5'-phosphoribosyl)-anthranilate (PRA). The protein is Anthranilate phosphoribosyltransferase of Geobacter sp. (strain M21).